The sequence spans 854 residues: Gamma-secretase-activating protein (854 aa).

It belongs to the GSAP family. In terms of assembly, interacts with APP; specifically interacts with the CTF-alpha product of APP. Interacts with the gamma-secretase complex. Post-translationally, the protein is first synthesized as a holoprotein form of 98 kDa and rapidly processed into the gamma-secretase-activating protein 16 kDa C-terminal form, which constitutes the predominant form. In terms of tissue distribution, widely expressed.

It localises to the golgi apparatus. It is found in the trans-Golgi network. Regulator of gamma-secretase activity, which specifically activates the production of amyloid-beta protein (amyloid-beta protein 40 and amyloid-beta protein 42), without affecting the cleavage of other gamma-secretase targets such has Notch. The gamma-secretase complex is an endoprotease complex that catalyzes the intramembrane cleavage of integral membrane proteins such as Notch receptors and APP (amyloid-beta precursor protein). Specifically promotes the gamma-cleavage of APP CTF-alpha (also named APP-CTF) by the gamma-secretase complex to generate amyloid-beta, while it reduces the epsilon-cleavage of APP CTF-alpha, leading to a low production of AICD. This is Gamma-secretase-activating protein (GSAP) from Homo sapiens (Human).